The sequence spans 320 residues: Cytochrome c biogenesis protein CcsA (320 aa).

The next 8 membrane-spanning stretches (helical) occupy residues 14 to 34, 37 to 57, 68 to 88, 97 to 117, 143 to 163, 228 to 248, 263 to 283, and 289 to 309; these read SFFL…YINI, ITIL…TFLL, LSNL…IHLI, WLGI…TLSL, MMLS…ILII, VISL…VWAN, WALI…IKGW, and AIIA…VNLL.

It belongs to the CcmF/CycK/Ccl1/NrfE/CcsA family. As to quaternary structure, may interact with Ccs1.

The protein resides in the plastid. It localises to the chloroplast thylakoid membrane. Required during biogenesis of c-type cytochromes (cytochrome c6 and cytochrome f) at the step of heme attachment. The polypeptide is Cytochrome c biogenesis protein CcsA (Marchantia polymorpha (Common liverwort)).